Consider the following 226-residue polypeptide: Phosphoglycolate phosphatase (226 aa).

Catalysis depends on Asp5, which acts as the Nucleophile. The Mg(2+) site is built by Asp5 and Asp7. A substrate-binding site is contributed by Lys142. Asp164 and Asp168 together coordinate Mg(2+).

It belongs to the archaeal SPP-like hydrolase family. The cofactor is Mg(2+).

It carries out the reaction 2-phosphoglycolate + H2O = glycolate + phosphate. Functionally, catalyzes the dephosphorylation of 2-phosphoglycolate. This Sulfurisphaera tokodaii (strain DSM 16993 / JCM 10545 / NBRC 100140 / 7) (Sulfolobus tokodaii) protein is Phosphoglycolate phosphatase.